The primary structure comprises 400 residues: MRTIDDLQVAGHRVLVRSDLNVPLDRSGDTPRITDDGRVRASVPTISALLDRGARVVVSSHLGRPKGEPDPKYSLEPVAGRLAELLGRPVAFAGDGSGDIAGAHAREVVAGLGDGEVALLENLRFAAGETSKDAAIRAAFADELSALAEFYVGDAFGAVHRAHASVADVPKRLPHAAGRLVLTELEVLRRLSSDPARPYSVVLGGSKVSDKLGVIRALLPKVDALLVGGGMCFTFLAALGHGVGGSLLETEMIETCKELLAEGGERIVLPTDVVVADRFAADADTAVVAADAIPAGWLGLDIGPASTELFAARLAGAATVFWNGPMGVFELAPFAAGTRGVAEAVAAGKGFSVVGGGDSAAAVRTLGIPEDAFSHISTGGGASLEYLEGKTLPGLAALDV.

Residues 19 to 21 (DLN), arginine 38, 61 to 64 (HLGR), arginine 124, and arginine 161 each bind substrate. Residues lysine 211, glycine 299, glutamate 330, and 356–359 (GGDS) contribute to the ATP site.

The protein belongs to the phosphoglycerate kinase family. Monomer.

The protein resides in the cytoplasm. The catalysed reaction is (2R)-3-phosphoglycerate + ATP = (2R)-3-phospho-glyceroyl phosphate + ADP. Its pathway is carbohydrate degradation; glycolysis; pyruvate from D-glyceraldehyde 3-phosphate: step 2/5. This Frankia casuarinae (strain DSM 45818 / CECT 9043 / HFP020203 / CcI3) protein is Phosphoglycerate kinase.